The primary structure comprises 93 residues: Cobalt transport protein CbiN (93 aa).

2 consecutive transmembrane segments (helical) span residues 5 to 25 (LMLL…NHGG) and 63 to 83 (LLFT…LGYC).

The protein belongs to the CbiN family. As to quaternary structure, forms an energy-coupling factor (ECF) transporter complex composed of an ATP-binding protein (A component, CbiO), a transmembrane protein (T component, CbiQ) and 2 possible substrate-capture proteins (S components, CbiM and CbiN) of unknown stoichimetry.

The protein localises to the cell inner membrane. The protein operates within cofactor biosynthesis; adenosylcobalamin biosynthesis. Its function is as follows. Part of the energy-coupling factor (ECF) transporter complex CbiMNOQ involved in cobalt import. In Salmonella choleraesuis (strain SC-B67), this protein is Cobalt transport protein CbiN.